The chain runs to 174 residues: Small ribosomal subunit protein uS5 (174 aa).

The region spanning Leu-19–Ile-82 is the S5 DRBM domain.

It belongs to the universal ribosomal protein uS5 family. In terms of assembly, part of the 30S ribosomal subunit. Contacts proteins S4 and S8.

In terms of biological role, with S4 and S12 plays an important role in translational accuracy. Its function is as follows. Located at the back of the 30S subunit body where it stabilizes the conformation of the head with respect to the body. In Albidiferax ferrireducens (strain ATCC BAA-621 / DSM 15236 / T118) (Rhodoferax ferrireducens), this protein is Small ribosomal subunit protein uS5.